Reading from the N-terminus, the 64-residue chain is Beta-defensin 13 (64 aa).

The N-terminal stretch at 1-22 (MRIFSLIVAGLVLLIQLYPAWG) is a signal peptide. 3 disulfides stabilise this stretch: Cys30-Cys57, Cys37-Cys51, and Cys41-Cys58.

This sequence belongs to the beta-defensin family. In terms of tissue distribution, expressed in testis and to a lesser extent in epididymis (caput, corpus and cauda). Also weakly expressed in kidneys.

Its subcellular location is the secreted. Its function is as follows. Has antibacterial activity. The chain is Beta-defensin 13 (Defb13) from Mus musculus (Mouse).